The primary structure comprises 192 residues: Peptidyl-tRNA hydrolase (192 aa).

The active-site Proton acceptor is His19. Residues Tyr64, Asn66, and Asn112 each coordinate tRNA.

The protein belongs to the PTH family. As to quaternary structure, monomer.

Its subcellular location is the cytoplasm. It catalyses the reaction an N-acyl-L-alpha-aminoacyl-tRNA + H2O = an N-acyl-L-amino acid + a tRNA + H(+). Hydrolyzes ribosome-free peptidyl-tRNAs (with 1 or more amino acids incorporated), which drop off the ribosome during protein synthesis, or as a result of ribosome stalling. Its function is as follows. Catalyzes the release of premature peptidyl moieties from peptidyl-tRNA molecules trapped in stalled 50S ribosomal subunits, and thus maintains levels of free tRNAs and 50S ribosomes. The chain is Peptidyl-tRNA hydrolase from Acidiphilium cryptum (strain JF-5).